Here is a 349-residue protein sequence, read N- to C-terminus: Two pore potassium channel b (349 aa).

The segment at 1 to 53 is disordered; the sequence is MAALDQQPLLHDGGDQKPPPEGAARRFRRCRTAPSSEPPPTDKDNSSAADAPP. The Cytoplasmic portion of the chain corresponds to 1-66; the sequence is MAALDQQPLL…FTGGGRPSFR (66 aa). A helical membrane pass occupies residues 67–87; it reads LVGLLLVAYLLLGTIAFYLAM. The pore-forming intramembrane region spans 100 to 119; sequence DALYFCVVTMTTVGYGDLVP. A helical transmembrane segment spans residues 123-143; that stretch reads AAKLLACAFVFAGVAVVGTFL. The Cytoplasmic segment spans residues 144 to 180; it reads SKAADYLVEKQEALLFRALHSHTMVRAMEMNKVRYKL. The chain crosses the membrane as a helical span at residues 181-201; sequence YTAGLLLVAAVASGTVVLWKV. The segment at residues 208–227 is an intramembrane region (pore-forming); sequence DAFYCVCATVTTLGYGDRSF. The helical transmembrane segment at 234 to 254 threads the bilayer; that stretch reads AFAVAWITVSTVVVALFFLYA. At 255 to 349 the chain is on the cytoplasmic side; that stretch reads AELYTERRQR…PTPDPPPSLR (95 aa). 2 EF-hand domains span residues 271 to 306 and 310 to 345; these read LRRR…ELGK and EDIS…PDPP. Positions 284, 286, 288, 290, 295, 323, 325, 327, 329, and 334 each coordinate Ca(2+). A disordered region spans residues 326–349; the sequence is HSGTLSPADLAAAQPTPDPPPSLR.

It belongs to the two pore domain potassium channel (TC 1.A.1.7) family. In terms of assembly, homodimer.

The protein localises to the vacuole membrane. Functionally, highly selective inward-rectifying potassium channel that is specifically located in the tonoplast of protein storage vacuoles. Functions independently of the voltage difference across the membrane. The protein is Two pore potassium channel b (TPKB) of Oryza sativa subsp. japonica (Rice).